Reading from the N-terminus, the 309-residue chain is Aspartate carbamoyltransferase catalytic subunit (309 aa).

The carbamoyl phosphate site is built by Arg-58 and Thr-59. Lys-86 serves as a coordination point for L-aspartate. Residues Arg-108, His-136, and Gln-139 each coordinate carbamoyl phosphate. L-aspartate contacts are provided by Arg-170 and Arg-224. Positions 266 and 267 each coordinate carbamoyl phosphate.

This sequence belongs to the aspartate/ornithine carbamoyltransferase superfamily. ATCase family. In terms of assembly, heterododecamer (2C3:3R2) of six catalytic PyrB chains organized as two trimers (C3), and six regulatory PyrI chains organized as three dimers (R2).

It carries out the reaction carbamoyl phosphate + L-aspartate = N-carbamoyl-L-aspartate + phosphate + H(+). It functions in the pathway pyrimidine metabolism; UMP biosynthesis via de novo pathway; (S)-dihydroorotate from bicarbonate: step 2/3. Its function is as follows. Catalyzes the condensation of carbamoyl phosphate and aspartate to form carbamoyl aspartate and inorganic phosphate, the committed step in the de novo pyrimidine nucleotide biosynthesis pathway. The polypeptide is Aspartate carbamoyltransferase catalytic subunit (Campylobacter curvus (strain 525.92)).